Reading from the N-terminus, the 290-residue chain is Eukaryotic translation initiation factor 3 subunit G (290 aa).

A disordered region spans residues 1 to 34 (MSRLGNRAADWADDEEFDDPSALPAQQVTTNKDG). Residues 210–288 (ATLRVTNVSE…LILRVEFAKR (79 aa)) enclose the RRM domain.

This sequence belongs to the eIF-3 subunit G family. Component of the eukaryotic translation initiation factor 3 (eIF-3) complex.

It localises to the cytoplasm. RNA-binding component of the eukaryotic translation initiation factor 3 (eIF-3) complex, which is involved in protein synthesis of a specialized repertoire of mRNAs and, together with other initiation factors, stimulates binding of mRNA and methionyl-tRNAi to the 40S ribosome. The eIF-3 complex specifically targets and initiates translation of a subset of mRNAs involved in cell proliferation. This subunit can bind 18S rRNA. This is Eukaryotic translation initiation factor 3 subunit G (tif35) from Aspergillus fumigatus (strain CBS 144.89 / FGSC A1163 / CEA10) (Neosartorya fumigata).